A 402-amino-acid polypeptide reads, in one-letter code: D-galactonate dehydratase family member RspA (402 aa).

Positions 37 and 122 each coordinate substrate. Tyr159 functions as the Proton donor/acceptor in the catalytic mechanism. Asp210 contacts Mg(2+). His212 serves as the catalytic Proton donor/acceptor. The Mg(2+) site is built by Glu236 and Glu262. The substrate site is built by Glu262, Arg283, His312, Asp316, and Glu339.

The protein belongs to the mandelate racemase/muconate lactonizing enzyme family. GalD subfamily. Requires Mg(2+) as cofactor.

The enzyme catalyses D-mannonate = 2-dehydro-3-deoxy-D-gluconate + H2O. In terms of biological role, has low D-mannonate dehydratase activity (in vitro), suggesting that this is not a physiological substrate and that it has no significant role in D-mannonate degradation in vivo. Has no detectable activity with a panel of 70 other acid sugars (in vitro). The sequence is that of D-galactonate dehydratase family member RspA (rspA) from Cellvibrio japonicus (strain Ueda107) (Pseudomonas fluorescens subsp. cellulosa).